An 84-amino-acid polypeptide reads, in one-letter code: Alpha-mammal toxin Aah3 (84 aa).

The first 19 residues, 1–19, serve as a signal peptide directing secretion; that stretch reads MNYLVMISLALLLMTGVES. The region spanning 21-82 is the LCN-type CS-alpha/beta domain; sequence RDGYIVDSKN…PIKDPSYKCH (62 aa). 4 disulfides stabilise this stretch: Cys31-Cys81, Cys35-Cys53, Cys39-Cys63, and Cys43-Cys65. Arg84 is a propeptide (removed by a carboxypeptidase).

The protein belongs to the long (4 C-C) scorpion toxin superfamily. Sodium channel inhibitor family. Alpha subfamily. As to expression, expressed by the venom gland.

It is found in the secreted. Functionally, alpha toxins bind voltage-independently at site-3 of sodium channels (Nav) and inhibit the inactivation of the activated channels, thereby blocking neuronal transmission. The sequence is that of Alpha-mammal toxin Aah3 from Androctonus australis (Sahara scorpion).